We begin with the raw amino-acid sequence, 382 residues long: uncharacterized protein (382 aa).

In terms of domain architecture, PE spans 1 to 92; sequence MQFLSVIPEQ…GATAYRNTEF (92 aa). 8 helical membrane passes run 23–43, 155–175, 203–223, 230–250, 261–281, 284–304, 315–335, and 347–367; these read SALSASYAAAAGPTTAVVSAA, AAVAPLPSAGAGLAQVVNGVV, FIVAGQSALTGVALLQPAVVG, TFLTAGTSAATGLGLLTLAGV, LASGTAATGLGLLGSAGVQLF, AFLLAVPTALGGVGSLAIAVV, LVVPNVVAGIAALQTAGAQFA, and LGAPGIAVLQTAGGHFAQGIG.

It belongs to the mycobacterial PE family.

Its subcellular location is the cell membrane. This is an uncharacterized protein from Mycobacterium bovis (strain ATCC BAA-935 / AF2122/97).